A 296-amino-acid chain; its full sequence is ATP synthase gamma chain (296 aa).

Residues 194–216 are disordered; that stretch reads IPASAGQAANDNAGSDQPAGDYE.

The protein belongs to the ATPase gamma chain family. In terms of assembly, F-type ATPases have 2 components, CF(1) - the catalytic core - and CF(0) - the membrane proton channel. CF(1) has five subunits: alpha(3), beta(3), gamma(1), delta(1), epsilon(1). CF(0) has three main subunits: a, b and c.

It localises to the cell inner membrane. Produces ATP from ADP in the presence of a proton gradient across the membrane. The gamma chain is believed to be important in regulating ATPase activity and the flow of protons through the CF(0) complex. The polypeptide is ATP synthase gamma chain (Acidiphilium cryptum (strain JF-5)).